The following is a 369-amino-acid chain: tRNA-specific 2-thiouridylase MnmA (369 aa).

ATP contacts are provided by residues 11–18 and M37; that span reads GMSGGVDS. The segment at 97–99 is interaction with target base in tRNA; it reads NPD. The Nucleophile role is filled by C102. C102 and C199 are disulfide-bonded. Residue G127 participates in ATP binding. The segment at 149–151 is interaction with tRNA; the sequence is KDQ. The Cysteine persulfide intermediate role is filled by C199. Residues 311–312 form an interaction with tRNA region; the sequence is RY.

The protein belongs to the MnmA/TRMU family. Interacts with TusE.

The protein localises to the cytoplasm. It carries out the reaction S-sulfanyl-L-cysteinyl-[protein] + uridine(34) in tRNA + AH2 + ATP = 2-thiouridine(34) in tRNA + L-cysteinyl-[protein] + A + AMP + diphosphate + H(+). Catalyzes the 2-thiolation of uridine at the wobble position (U34) of tRNA(Lys), tRNA(Glu) and tRNA(Gln), leading to the formation of s(2)U34, the first step of tRNA-mnm(5)s(2)U34 synthesis. Sulfur is provided by IscS, via a sulfur-relay system. Binds ATP and its substrate tRNAs. This is tRNA-specific 2-thiouridylase MnmA from Enterobacter sp. (strain 638).